The chain runs to 214 residues: Adenylate kinase (214 aa).

10–15 (GSGKGT) contacts ATP. Positions 30–59 (STGDMLRAAVREGTPLGMEAKKIMDAGQLV) are NMP. AMP is bound by residues T31, R36, 57–59 (QLV), 85–88 (GFPR), and Q92. The tract at residues 122 to 159 (GRRVHPASGRTYHVVFNPPKVEGRDDETGEPLVQREDD) is LID. ATP contacts are provided by residues R123 and 132-133 (TY). R156 and R167 together coordinate AMP. G200 serves as a coordination point for ATP.

It belongs to the adenylate kinase family. As to quaternary structure, monomer.

Its subcellular location is the cytoplasm. The catalysed reaction is AMP + ATP = 2 ADP. Its pathway is purine metabolism; AMP biosynthesis via salvage pathway; AMP from ADP: step 1/1. In terms of biological role, catalyzes the reversible transfer of the terminal phosphate group between ATP and AMP. Plays an important role in cellular energy homeostasis and in adenine nucleotide metabolism. The sequence is that of Adenylate kinase from Methylococcus capsulatus (strain ATCC 33009 / NCIMB 11132 / Bath).